A 93-amino-acid polypeptide reads, in one-letter code: MDGIKYAVFTDKSIRLLGKNQYTFNVESGSTRTEIKHWVELFFGVKVIAMNSHRLPGKVKRMGPILGHTMHYRRMIITLQPGYSIPPLRKKRT.

The protein belongs to the universal ribosomal protein uL23 family. In terms of assembly, part of the 50S ribosomal subunit.

It is found in the plastid. The protein resides in the chloroplast. In terms of biological role, binds to 23S rRNA. This is Large ribosomal subunit protein uL23cz/uL23cy (rpl23-A) from Arabidopsis thaliana (Mouse-ear cress).